The following is a 396-amino-acid chain: S-arrestin (396 aa).

It belongs to the arrestin family.

Functionally, arrestin is one of the major proteins of the ros (retinal rod outer segments); it binds to photoactivated-phosphorylated rhodopsin, thereby apparently preventing the transducin-mediated activation of phosphodiesterase. This is S-arrestin from Lithobates pipiens (Northern leopard frog).